The sequence spans 873 residues: Bifunctional uridylyltransferase/uridylyl-removing enzyme (873 aa).

The segment at 1–332 is uridylyltransferase; it reads MKYLSPLSLS…HQGEQDDAII (332 aa). Residues 333–692 form a uridylyl-removing region; it reads IDDDFQRRGR…ISKNASRGGT (360 aa). The HD domain occupies 451-573; sequence VDEHSIRLLK…VRDEERLDYL (123 aa). ACT domains lie at 693 to 777 and 800 to 873; these read EIFV…RPPR and LMEF…RLSS.

It belongs to the GlnD family. Mg(2+) serves as cofactor.

The catalysed reaction is [protein-PII]-L-tyrosine + UTP = [protein-PII]-uridylyl-L-tyrosine + diphosphate. The enzyme catalyses [protein-PII]-uridylyl-L-tyrosine + H2O = [protein-PII]-L-tyrosine + UMP + H(+). Uridylyltransferase (UTase) activity is inhibited by glutamine, while glutamine activates uridylyl-removing (UR) activity. In terms of biological role, modifies, by uridylylation and deuridylylation, the PII regulatory proteins (GlnB and homologs), in response to the nitrogen status of the cell that GlnD senses through the glutamine level. Under low glutamine levels, catalyzes the conversion of the PII proteins and UTP to PII-UMP and PPi, while under higher glutamine levels, GlnD hydrolyzes PII-UMP to PII and UMP (deuridylylation). Thus, controls uridylylation state and activity of the PII proteins, and plays an important role in the regulation of nitrogen assimilation and metabolism. The chain is Bifunctional uridylyltransferase/uridylyl-removing enzyme from Aliivibrio fischeri (strain ATCC 700601 / ES114) (Vibrio fischeri).